A 1359-amino-acid chain; its full sequence is Junctional cadherin 5-associated protein (1359 aa).

9 disordered regions span residues 1 to 147 (MYSV…SLPV), 249 to 411 (PLNE…PAHP), 454 to 554 (NSSP…TCET), 591 to 813 (SHLP…CNSK), 840 to 1076 (KELQ…TIEI), 1105 to 1141 (RAGQ…PRVS), 1157 to 1207 (PLFV…KDVE), 1225 to 1260 (SVAG…DRLM), and 1276 to 1359 (FRNA…VERV). Basic and acidic residues predominate over residues 15-28 (LSRDPPASREDNPK). Polar residues-rich tracts occupy residues 82 to 91 (PQSTSASRTS) and 98 to 112 (QPPS…TGND). Over residues 120–135 (RQEARSQKPREHENLE) the composition is skewed to basic and acidic residues. A compositionally biased stretch (low complexity) spans 302–321 (QQSRGGADSSDSQDSQQMDA). Positions 335–353 (LEPPVYVPPPSYRSPPQNI) are enriched in pro residues. A compositionally biased stretch (polar residues) spans 539 to 554 (RQVSSPYSQGESTCET). The span at 591–613 (SHLPDRDMDNNDLKPSADQKNGS) shows a compositional bias: basic and acidic residues. Composition is skewed to polar residues over residues 619–632 (LQEQ…STDL), 689–704 (QQTQ…SSQL), and 756–773 (LSPS…SVDQ). Residues 849-859 (SSSSSSSSSSS) show a composition bias toward low complexity. Positions 868 to 880 (QENRAHCRQEDVG) are enriched in basic and acidic residues. The span at 1003-1013 (PKITSAFSSVK) shows a compositional bias: polar residues. Phosphoserine occurs at positions 1044 and 1050. Residue Ser1194 is modified to Phosphoserine. Ser1281 carries the phosphoserine modification. A compositionally biased stretch (basic and acidic residues) spans 1324–1342 (SISREEKEHPAAQKEKSMD).

Its subcellular location is the cell junction. It is found in the adherens junction. The chain is Junctional cadherin 5-associated protein from Homo sapiens (Human).